A 59-amino-acid polypeptide reads, in one-letter code: Small, acid-soluble spore protein H (59 aa).

This sequence belongs to the SspH family.

The protein resides in the spore core. In Bacillus cereus (strain ZK / E33L), this protein is Small, acid-soluble spore protein H.